Consider the following 186-residue polypeptide: MAVEIPNKEQILADWEAHPMRRPRIEKVTINIGVGESGERLTKAEIMLQQLTGQKPIRRKAKKTNRDFGIRRGEPIAVKVTLRGPKAYELLKRLLAAVDNRLKASSFDEHGNVCFGIEEHINIPGVEYDPEIGIFGMDVCVTLERPGFRVARRKRKRAKIPTRHKLTKEEGMVYMMEEFGVEIVEG.

It belongs to the universal ribosomal protein uL5 family. As to quaternary structure, part of the 50S ribosomal subunit; contacts the 5S rRNA and probably tRNA. Forms a bridge to the 30S subunit in the 70S ribosome.

In terms of biological role, this is one of the proteins that bind and probably mediate the attachment of the 5S RNA into the large ribosomal subunit, where it forms part of the central protuberance. In the 70S ribosome it contacts protein S13 of the 30S subunit (bridge B1b), connecting the 2 subunits; this bridge is implicated in subunit movement. May contact the P site tRNA; the 5S rRNA and some of its associated proteins might help stabilize positioning of ribosome-bound tRNAs. This Pyrococcus furiosus (strain ATCC 43587 / DSM 3638 / JCM 8422 / Vc1) protein is Large ribosomal subunit protein uL5.